A 381-amino-acid chain; its full sequence is L-lactate dehydrogenase A-like 6B (381 aa).

NAD(+) is bound by residues aspartate 101 to lysine 106 and arginine 148. The substrate site is built by arginine 155, asparagine 187, and arginine 218. Residue asparagine 187 coordinates NAD(+). Histidine 242 acts as the Proton acceptor in catalysis. Threonine 297 is a substrate binding site.

Belongs to the LDH/MDH superfamily. LDH family. Testis specific.

The enzyme catalyses (S)-lactate + NAD(+) = pyruvate + NADH + H(+). The protein operates within fermentation; pyruvate fermentation to lactate; (S)-lactate from pyruvate: step 1/1. This chain is L-lactate dehydrogenase A-like 6B (LDHAL6B), found in Homo sapiens (Human).